The sequence spans 181 residues: Ribosome maturation factor RimM (181 aa).

One can recognise a PRC barrel domain in the interval 97–170 (AGEFWLPDLM…RIEVVAIPGL (74 aa)).

It belongs to the RimM family. In terms of assembly, binds ribosomal protein uS19.

It is found in the cytoplasm. Its function is as follows. An accessory protein needed during the final step in the assembly of 30S ribosomal subunit, possibly for assembly of the head region. Essential for efficient processing of 16S rRNA. May be needed both before and after RbfA during the maturation of 16S rRNA. It has affinity for free ribosomal 30S subunits but not for 70S ribosomes. In Gloeobacter violaceus (strain ATCC 29082 / PCC 7421), this protein is Ribosome maturation factor RimM.